The sequence spans 62 residues: Conotoxin Qc5.1 (62 aa).

The N-terminal stretch at 1–22 is a signal peptide; that stretch reads MRCVPVFIILLLLSPSAPSVDA. A propeptide spanning residues 23 to 48 is cleaved from the precursor; that stretch reads HPMTKDDVPQASFHDDAKRTLQVPWM. Valine amide is present on Val60.

It belongs to the conotoxin T superfamily. Post-translationally, contains 2 disulfide bonds that can be either 'C1-C3, C2-C4' or 'C1-C4, C2-C3', since these disulfide connectivities have been observed for conotoxins with cysteine framework V (for examples, see AC P0DQQ7 and AC P81755). As to expression, expressed by the venom duct.

It is found in the secreted. The protein is Conotoxin Qc5.1 of Conus quercinus (Oak cone).